The sequence spans 427 residues: Glutamate-1-semialdehyde 2,1-aminomutase (427 aa).

An N6-(pyridoxal phosphate)lysine modification is found at lysine 265.

It belongs to the class-III pyridoxal-phosphate-dependent aminotransferase family. HemL subfamily. In terms of assembly, homodimer. Pyridoxal 5'-phosphate is required as a cofactor.

Its subcellular location is the cytoplasm. The enzyme catalyses (S)-4-amino-5-oxopentanoate = 5-aminolevulinate. The protein operates within porphyrin-containing compound metabolism; protoporphyrin-IX biosynthesis; 5-aminolevulinate from L-glutamyl-tRNA(Glu): step 2/2. In Marinomonas sp. (strain MWYL1), this protein is Glutamate-1-semialdehyde 2,1-aminomutase.